A 338-amino-acid polypeptide reads, in one-letter code: Glyceraldehyde-3-phosphate dehydrogenase 2 (338 aa).

NAD(+)-binding positions include 11 to 12 (RI), D33, and R78. D-glyceraldehyde 3-phosphate contacts are provided by residues 149 to 151 (SCT), T180, 209 to 210 (TG), and R232. Catalysis depends on C150, which acts as the Nucleophile. Residue N314 coordinates NAD(+).

The protein belongs to the glyceraldehyde-3-phosphate dehydrogenase family. As to quaternary structure, homotetramer.

The protein resides in the cytoplasm. It catalyses the reaction D-glyceraldehyde 3-phosphate + phosphate + NAD(+) = (2R)-3-phospho-glyceroyl phosphate + NADH + H(+). It functions in the pathway carbohydrate degradation; glycolysis; pyruvate from D-glyceraldehyde 3-phosphate: step 1/5. The polypeptide is Glyceraldehyde-3-phosphate dehydrogenase 2 (gpd2) (Agaricus bisporus (White button mushroom)).